The sequence spans 361 residues: Deoxyhypusine hydroxylase (361 aa).

HEAT-like PBS-type repeat units follow at residues L59–N85, V94–D120, Q183–D211, and F216–D242. The Fe cation site is built by H61, E62, H96, and E97. 4 residues coordinate Fe cation: H218, E219, H251, and E252.

It belongs to the deoxyhypusine hydroxylase family. Fe(2+) serves as cofactor.

Its subcellular location is the cytoplasm. It localises to the nucleus. It catalyses the reaction [eIF5A protein]-deoxyhypusine + AH2 + O2 = [eIF5A protein]-hypusine + A + H2O. It participates in protein modification; eIF5A hypusination. Functionally, catalyzes the hydroxylation of the N(6)-(4-aminobutyl)-L-lysine intermediate to form hypusine, an essential post-translational modification only found in mature eIF-5A factor. The sequence is that of Deoxyhypusine hydroxylase from Cryptococcus neoformans var. neoformans serotype D (strain B-3501A) (Filobasidiella neoformans).